The primary structure comprises 461 residues: Ribulose bisphosphate carboxylase (461 aa).

A substrate-binding site is contributed by asparagine 112. Lysine 167 (proton acceptor) is an active-site residue. Position 169 (lysine 169) interacts with substrate. Mg(2+) contacts are provided by lysine 192, aspartate 194, and glutamate 195. Lysine 192 carries the N6-carboxylysine modification. Catalysis depends on histidine 288, which acts as the Proton acceptor. Substrate is bound by residues arginine 289, histidine 322, and serine 369.

The protein belongs to the RuBisCO large chain family. Type II subfamily. As to quaternary structure, homodimer. The cofactor is Mg(2+).

The catalysed reaction is 2 (2R)-3-phosphoglycerate + 2 H(+) = D-ribulose 1,5-bisphosphate + CO2 + H2O. The enzyme catalyses D-ribulose 1,5-bisphosphate + O2 = 2-phosphoglycolate + (2R)-3-phosphoglycerate + 2 H(+). Functionally, ruBisCO catalyzes two reactions: the carboxylation of D-ribulose 1,5-bisphosphate, the primary event in carbon dioxide fixation, as well as the oxidative fragmentation of the pentose substrate. Both reactions occur simultaneously and in competition at the same active site. The chain is Ribulose bisphosphate carboxylase from Rhodopseudomonas palustris (strain BisB5).